The primary structure comprises 466 residues: Coagulation factor IX (466 aa).

Positions 1-25 (MRCLNMIMAEPPGLITICLLGYLLG) are cleaved as a signal peptide. The propeptide occupies 26–46 (ADCTVFLDHEDATKVLSRPKR). Residues Y47, N48, E53, E54, E61, E63, E66, E67, E72, E73, and E76 each coordinate Ca(2+). Positions 47–92 (YNSGKLEEFVQGNLERECMEEKCSFEEAREVFENTEKTTEFWKQYV) constitute a Gla domain. E53, E54, E61, E63, E66, E67, E72, E73, E76, E79, and E82 each carry 4-carboxyglutamate. E61 contributes to the Mg(2+) binding site. C64 and C69 are joined by a disulfide. E66 provides a ligand contact to Mg(2+). E72 provides a ligand contact to Mg(2+). Position 76 (E76) interacts with Mg(2+). E82 is a Ca(2+) binding site. Mg(2+) is bound at residue E82. The O-linked (GalNAc...) threonine glycan is linked to T85. Positions 86, 93, 94, and 96 each coordinate Ca(2+). At E86 the chain carries 4-carboxyglutamate. Position 86 (E86) interacts with Mg(2+). Positions 93–129 (DGDQCESNPCLNGGICKDDINSYECWCQTGFEGKNCE) constitute an EGF-like 1; calcium-binding domain. 10 disulfide bridges follow: C97/C108, C102/C117, C119/C128, C134/C145, C141/C155, C157/C170, C178/C340, C257/C273, C387/C401, and C412/C440. S99 carries an O-linked (Glc...) serine glycan. D110 and D111 together coordinate Ca(2+). D110 carries the (3R)-3-hydroxyaspartate modification. A Phosphoserine modification is found at S114. Residues 130 to 171 (LDVTCNIKNGRCKQFCKLDADNKVVCSCTTGYQLAEDQKSCE) form the EGF-like 2 domain. Residues 193-231 (AETLFLNMDYENSTTDYENSAEAEKNVDNVTQPLNDLTR) constitute a propeptide, activation peptide. Residue Y202 is modified to Sulfotyrosine. S205 carries the post-translational modification Phosphoserine. T206 is subject to Phosphothreonine; alternate. O-linked (GalNAc...) threonine; alternate glycosylation occurs at T206. N221 is a glycosylation site (N-linked (GlcNAc...) asparagine). T223 and T230 each carry an O-linked (GalNAc...) threonine glycan. The region spanning 232-464 (IVGGKTAKPG…YVNWIKEKTK (233 aa)) is the Peptidase S1 domain. H272 serves as the catalytic Charge relay system. Ca(2+)-binding residues include E286, N288, E291, E293, and E296. Residue D320 is the Charge relay system of the active site. Residue S416 is the Charge relay system of the active site.

It belongs to the peptidase S1 family. As to quaternary structure, heterodimer of a light chain and a heavy chain; disulfide-linked. Interacts (inactive and activated) with F11 (activated) in calcium-dependent manner. Interacts with SERPINC1. The iron and 2-oxoglutarate dependent 3-hydroxylation of aspartate and asparagine is (R) stereospecific within EGF domains. In terms of processing, activated by factor XIa, which excises the activation peptide. The propeptide can also be removed by snake venom protease. Activated by coagulation factor VIIa-tissue factor (F7-F3) complex in calcium-dependent manner. Post-translationally, predominantly O-glucosylated at Ser-99 by POGLUT1 in vitro.

The protein resides in the secreted. The catalysed reaction is Selective cleavage of Arg-|-Ile bond in factor X to form factor Xa.. Its function is as follows. Factor IX is a vitamin K-dependent plasma protein that participates in the intrinsic pathway of blood coagulation by converting factor X to its active form in the presence of Ca(2+) ions, phospholipids, and factor VIIIa. The chain is Coagulation factor IX (F9) from Felis catus (Cat).